We begin with the raw amino-acid sequence, 98 residues long: NADH-ubiquinone oxidoreductase chain 4L (98 aa).

The next 3 helical transmembrane spans lie at 1-21 (MSMV…GLLI), 30-50 (LLCL…TILT), and 61-81 (IILL…LVMI).

The protein belongs to the complex I subunit 4L family. In terms of assembly, core subunit of respiratory chain NADH dehydrogenase (Complex I) which is composed of 45 different subunits.

The protein localises to the mitochondrion inner membrane. It catalyses the reaction a ubiquinone + NADH + 5 H(+)(in) = a ubiquinol + NAD(+) + 4 H(+)(out). Functionally, core subunit of the mitochondrial membrane respiratory chain NADH dehydrogenase (Complex I) which catalyzes electron transfer from NADH through the respiratory chain, using ubiquinone as an electron acceptor. Part of the enzyme membrane arm which is embedded in the lipid bilayer and involved in proton translocation. The polypeptide is NADH-ubiquinone oxidoreductase chain 4L (MT-ND4L) (Martes americana (American marten)).